Consider the following 195-residue polypeptide: ATP synthase subunit b (195 aa).

A helical membrane pass occupies residues 28-48 (IFPNVYVLIAHVISLIFLLLL).

It belongs to the ATPase B chain family. As to quaternary structure, F-type ATPases have 2 components, F(1) - the catalytic core - and F(0) - the membrane proton channel. F(1) has five subunits: alpha(3), beta(3), gamma(1), delta(1), epsilon(1). F(0) has three main subunits: a(1), b(2) and c(10-14). The alpha and beta chains form an alternating ring which encloses part of the gamma chain. F(1) is attached to F(0) by a central stalk formed by the gamma and epsilon chains, while a peripheral stalk is formed by the delta and b chains.

It localises to the cell membrane. Its function is as follows. F(1)F(0) ATP synthase produces ATP from ADP in the presence of a proton or sodium gradient. F-type ATPases consist of two structural domains, F(1) containing the extramembraneous catalytic core and F(0) containing the membrane proton channel, linked together by a central stalk and a peripheral stalk. During catalysis, ATP synthesis in the catalytic domain of F(1) is coupled via a rotary mechanism of the central stalk subunits to proton translocation. Functionally, component of the F(0) channel, it forms part of the peripheral stalk, linking F(1) to F(0). The polypeptide is ATP synthase subunit b (Malacoplasma penetrans (strain HF-2) (Mycoplasma penetrans)).